The primary structure comprises 346 residues: Small glutamine-rich tetratricopeptide repeat-containing protein 2 (346 aa).

4 TPR repeats span residues 102-135 (AEDLKMQGNKAMANKDYELAINKYTEAIKVLPTN), 136-169 (AIYYANRAAAHSSLKEYDQAVKDAESAISIDPSY), 170-203 (FRGYSRLGFAKYAQGKPEEALEAYKKVLDIEGDN), and 205-229 (TEAMKRDYESAKKKVEQSLNLEKTV). The interval 219–249 (VEQSLNLEKTVPEQSRDADVDASQGASAGGL) is disordered. A compositionally biased stretch (basic and acidic residues) spans 228 to 237 (TVPEQSRDAD). A Phosphothreonine modification is found at Thr308. The segment at 325 to 346 (GNLFGGAGAQSTDETPDNENKQ) is disordered.

Belongs to the SGT family. Interacts with HSC82, HSP104, MDY2, SSA1 and SSA2.

It localises to the cytoplasm. In terms of biological role, co-chaperone that binds to the molecular chaperone Hsp70 (SSA1 and SSA2). Regulates Hsp70 ATPase activity. Required for recovery from heat shock. In Saccharomyces cerevisiae (strain ATCC 204508 / S288c) (Baker's yeast), this protein is Small glutamine-rich tetratricopeptide repeat-containing protein 2 (SGT2).